Reading from the N-terminus, the 118-residue chain is C-type natriuretic peptide 2 (118 aa).

The N-terminal stretch at 1-22 (MHFCHIVGWGLVLAVLYLRTEA) is a signal peptide. The propeptide occupies 23–96 (KPVAQAHQKS…SRKIKGINKK (74 aa)). A disulfide bridge links Cys102 with Cys118.

Belongs to the natriuretic peptide family.

The protein localises to the secreted. Its function is as follows. Exhibits natriuretic and vasodepressor activity. Has a cGMP-stimulating activity. The polypeptide is C-type natriuretic peptide 2 (Aquarana catesbeiana (American bullfrog)).